Reading from the N-terminus, the 195-residue chain is CDP-diacylglycerol--glycerol-3-phosphate 3-phosphatidyltransferase (195 aa).

4 helical membrane passes run 7 to 24 (ITVL…LFYL), 60 to 81 (FGAF…VLLV), 134 to 150 (MLAL…FTFW), and 157 to 173 (FLLI…LQYL).

It belongs to the CDP-alcohol phosphatidyltransferase class-I family.

The protein resides in the cell membrane. It carries out the reaction a CDP-1,2-diacyl-sn-glycerol + sn-glycerol 3-phosphate = a 1,2-diacyl-sn-glycero-3-phospho-(1'-sn-glycero-3'-phosphate) + CMP + H(+). Its pathway is phospholipid metabolism; phosphatidylglycerol biosynthesis; phosphatidylglycerol from CDP-diacylglycerol: step 1/2. Its function is as follows. This protein catalyzes the committed step to the synthesis of the acidic phospholipids. This chain is CDP-diacylglycerol--glycerol-3-phosphate 3-phosphatidyltransferase (pgsA), found in Pseudomonas fluorescens.